Here is a 588-residue protein sequence, read N- to C-terminus: Ankyrin repeat protein OPG003 (588 aa).

ANK repeat units lie at residues 69 to 101, 175 to 223, 227 to 259, 300 to 336, and 339 to 368; these read CGNSPLHCYTMNTRFNPSVLKILLRHGMRNFDS, DGLT…NINA, IGNTPLHTYLQQYTKHSPRVVYALLSRGADTRI, EGQHLLYLFIKHNQGYGSRSLNILRYLLDRFDIQKDE, and NTMTPLHTAFQNCNNNVASYLVYIGYDINL. The PRANC/F-box-like stretch occupies residues 557 to 574; the sequence is LPPEIMRNIITKLSDYHL.

It belongs to the orthopoxvirus OPG003 family.

Functionally, may be involved in virus-host protein interaction through the ankyrin repeats and PRANC regions. This is Ankyrin repeat protein OPG003 (OPG003) from Cynomys gunnisoni (Gunnison's prairie dog).